Consider the following 385-residue polypeptide: UPF0284 protein PMT9312_0438 (385 aa).

Belongs to the UPF0284 family.

The polypeptide is UPF0284 protein PMT9312_0438 (Prochlorococcus marinus (strain MIT 9312)).